Here is a 119-residue protein sequence, read N- to C-terminus: cAMP-responsive element-binding protein-like 2 (119 aa).

The segment at 1–23 (MDDSKIVAGKVKKPGKRGRKPAK) is disordered. Positions 10–21 (KVKKPGKRGRKP) are enriched in basic residues. Positions 23 to 86 (KIDLKAKLER…LAMDQGKIPS (64 aa)) constitute a bZIP domain. Positions 29–60 (KLERSRQSARECRARKKLRYQYLEELVSSKER) are basic motif. The segment at 62–69 (ICALREEL) is leucine-zipper. The segment at 95–119 (DEQKTPQSCSNKTTKNSKYSSSSGI) is disordered. Residues 102-119 (SCSNKTTKNSKYSSSSGI) show a composition bias toward low complexity.

This sequence belongs to the bZIP family. ATF subfamily.

Its subcellular location is the nucleus. In terms of biological role, probable regulator of creb1 transcriptional activity which is involved in adipose cells differentiation. May also play a regulatory role in the cell cycle. This is cAMP-responsive element-binding protein-like 2 (crebl2) from Danio rerio (Zebrafish).